We begin with the raw amino-acid sequence, 510 residues long: ATP synthase subunit alpha (510 aa).

169 to 176 (GDRQTGKT) provides a ligand contact to ATP.

It belongs to the ATPase alpha/beta chains family. F-type ATPases have 2 components, CF(1) - the catalytic core - and CF(0) - the membrane proton channel. CF(1) has five subunits: alpha(3), beta(3), gamma(1), delta(1), epsilon(1). CF(0) has three main subunits: a(1), b(2) and c(9-12). The alpha and beta chains form an alternating ring which encloses part of the gamma chain. CF(1) is attached to CF(0) by a central stalk formed by the gamma and epsilon chains, while a peripheral stalk is formed by the delta and b chains.

Its subcellular location is the cell inner membrane. The enzyme catalyses ATP + H2O + 4 H(+)(in) = ADP + phosphate + 5 H(+)(out). In terms of biological role, produces ATP from ADP in the presence of a proton gradient across the membrane. The alpha chain is a regulatory subunit. The protein is ATP synthase subunit alpha of Anaeromyxobacter dehalogenans (strain 2CP-C).